Here is a 501-residue protein sequence, read N- to C-terminus: Solute carrier family 2, facilitated glucose transporter member 5 (501 aa).

Met-1 carries the post-translational modification N-acetylmethionine. Over Met-1 to Ala-18 the chain is Cytoplasmic. Residues Leu-19–Val-39 form a helical membrane-spanning segment. Position 32 (Tyr-32) interacts with D-fructose. At Asn-40–Thr-68 the chain is on the extracellular side. Asn-51 is a glycosylation site (N-linked (GlcNAc...) asparagine). A helical transmembrane segment spans residues Leu-69–Pro-91. The Cytoplasmic segment spans residues Leu-92–Arg-98. Residues Lys-99–Ser-119 traverse the membrane as a helical segment. The Extracellular portion of the chain corresponds to Lys-120–Glu-126. A helical transmembrane segment spans residues Met-127–Tyr-149. Residues Leu-150–Ala-161 are Cytoplasmic-facing. The chain crosses the membrane as a helical span at residues Leu-162–Leu-182. Gln-167 lines the D-fructose pocket. Residues Arg-183–Trp-192 lie on the Extracellular side of the membrane. The chain crosses the membrane as a helical span at residues Pro-193–Phe-213. Topologically, residues Pro-214 to Gln-277 are cytoplasmic. A helical transmembrane segment spans residues Val-278–Tyr-298. Residues Gln-288 and Ile-296 to Tyr-298 contribute to the D-fructose site. Residues Tyr-299–Asp-313 are Extracellular-facing. Residues Val-314–Phe-334 form a helical membrane-spanning segment. The Cytoplasmic segment spans residues Val-335–Arg-342. A helical membrane pass occupies residues Ala-343–Leu-363. At Ala-364–Trp-371 the chain is on the extracellular side. Residues Met-372 to Ile-394 traverse the membrane as a helical segment. His-387 serves as a coordination point for D-fructose. Residues Pro-395–Tyr-412 lie on the Cytoplasmic side of the membrane. Residues Met-413 to Ile-433 form a helical membrane-spanning segment. Residue His-419–Trp-420 coordinates D-fructose. Residues Gln-434–Ala-439 are Extracellular-facing. Residues Tyr-440 to Val-460 form a helical membrane-spanning segment. Topologically, residues Pro-461–Leu-501 are cytoplasmic.

It belongs to the major facilitator superfamily. Sugar transporter (TC 2.A.1.1) family. Glucose transporter subfamily.

The protein localises to the apical cell membrane. It localises to the cell membrane. The protein resides in the sarcolemma. It catalyses the reaction D-fructose(out) = D-fructose(in). Its function is as follows. Functions as a fructose transporter that has only low activity with other monosaccharides. Can mediate the uptake of deoxyglucose, but with low efficiency. Essential for fructose uptake in the small intestine. Plays a role in the regulation of salt uptake and blood pressure in response to dietary fructose. Required for the development of high blood pressure in response to high dietary fructose intake. This Equus caballus (Horse) protein is Solute carrier family 2, facilitated glucose transporter member 5.